Reading from the N-terminus, the 506-residue chain is Lysine--tRNA ligase (506 aa).

Residues E416 and E423 each contribute to the Mg(2+) site.

The protein belongs to the class-II aminoacyl-tRNA synthetase family. As to quaternary structure, homodimer. The cofactor is Mg(2+).

It is found in the cytoplasm. The enzyme catalyses tRNA(Lys) + L-lysine + ATP = L-lysyl-tRNA(Lys) + AMP + diphosphate. The sequence is that of Lysine--tRNA ligase from Bordetella parapertussis (strain 12822 / ATCC BAA-587 / NCTC 13253).